The sequence spans 138 residues: Acidic phospholipase A2 Tpu-E6a (138 aa).

Residues 1 to 16 form the signal peptide; the sequence is MRTLWIMAVLLLGVKG. Disulfide bonds link C42/C131, C44/C60, C59/C111, C65/C138, C66/C104, C73/C97, and C91/C102. Positions 43, 45, and 47 each coordinate Ca(2+). Residue H63 is part of the active site. Position 64 (D64) interacts with Ca(2+). D105 is an active-site residue.

In terms of assembly, monomer. Ca(2+) serves as cofactor. Expressed by the venom gland.

The protein localises to the secreted. The catalysed reaction is a 1,2-diacyl-sn-glycero-3-phosphocholine + H2O = a 1-acyl-sn-glycero-3-phosphocholine + a fatty acid + H(+). Functionally, snake venom phospholipase A2 (PLA2) that impairs hemostasis. It weakly inhibits ADP-induced platelet aggregation when tested on platelet rich plasma from human and rabbit blood (15-25% of inhibition at 5-10 ug of enzyme), and dose-dependently inhibits blood coagulation, possibly by inhibiting thrombin activation. Exhibits high hydrolytic activities toward L-dipalmitoyl phosphatidylcholine. PLA2 catalyzes the calcium-dependent hydrolysis of the 2-acyl groups in 3-sn-phosphoglycerides. This is Acidic phospholipase A2 Tpu-E6a from Craspedocephalus puniceus (Flat-nosed pitviper).